Consider the following 203-residue polypeptide: MFEGPVQDLIDELGKLPGIGPKSAQRIAFHLLSVEPPDIDRLTAVLAKVRDGVRFCAVCGNVSDDERCRICADPRRDGALVCVVEEPKDIQAVERTREYRGRYHVLGGAFDPLSGIGPEQLRIRELLTRIGDRVDGVDITEVIIATDPNTEGEATATYLVRMLRDIPGLTVTRIASGLPMGGDLEFADELTLGRALTGRRAMV.

The C4-type zinc finger occupies 56–71 (CAVCGNVSDDERCRIC). A Toprim domain is found at 79 to 179 (ALVCVVEEPK…TVTRIASGLP (101 aa)).

Belongs to the RecR family.

In terms of biological role, may play a role in DNA repair. It seems to be involved in an RecBC-independent recombinational process of DNA repair. It may act with RecF and RecO. This Mycobacterium ulcerans (strain Agy99) protein is Recombination protein RecR.